Here is a 225-residue protein sequence, read N- to C-terminus: MANINFGFEHHASKLYSGAIEEGIQNSLVPMVIETSGRGERAFDIFSRLLRERIIFLGSGIDEHVAGLIMAQLIFLESEDPDRDIFIYVNSPGGSVSAGLGIYDTMQYIRPDVSTVCVGMAASMGAFLLASGAKGKRASLPHSRIMIHQPSGGAQGQESDIIIQAREIEKIRRLLEEIMAKHTGKDVQQVREDSERDRWMDAGEALEYGIIDQVFEKRPAPEKKD.

Serine 123 (nucleophile) is an active-site residue. Histidine 148 is a catalytic residue.

The protein belongs to the peptidase S14 family. Fourteen ClpP subunits assemble into 2 heptameric rings which stack back to back to give a disk-like structure with a central cavity, resembling the structure of eukaryotic proteasomes.

It is found in the cytoplasm. The enzyme catalyses Hydrolysis of proteins to small peptides in the presence of ATP and magnesium. alpha-casein is the usual test substrate. In the absence of ATP, only oligopeptides shorter than five residues are hydrolyzed (such as succinyl-Leu-Tyr-|-NHMec, and Leu-Tyr-Leu-|-Tyr-Trp, in which cleavage of the -Tyr-|-Leu- and -Tyr-|-Trp bonds also occurs).. Its function is as follows. Cleaves peptides in various proteins in a process that requires ATP hydrolysis. Has a chymotrypsin-like activity. Plays a major role in the degradation of misfolded proteins. In Chlorobium phaeovibrioides (strain DSM 265 / 1930) (Prosthecochloris vibrioformis (strain DSM 265)), this protein is ATP-dependent Clp protease proteolytic subunit.